The chain runs to 197 residues: Negative modulator of initiation of replication (197 aa).

Belongs to the SeqA family. As to quaternary structure, homodimer. Polymerizes to form helical filaments.

The protein localises to the cytoplasm. Its function is as follows. Negative regulator of replication initiation, which contributes to regulation of DNA replication and ensures that replication initiation occurs exactly once per chromosome per cell cycle. Binds to pairs of hemimethylated GATC sequences in the oriC region, thus preventing assembly of replication proteins and re-initiation at newly replicated origins. Repression is relieved when the region becomes fully methylated. In Pseudoalteromonas translucida (strain TAC 125), this protein is Negative modulator of initiation of replication.